We begin with the raw amino-acid sequence, 151 residues long: 3-hydroxyacyl-[acyl-carrier-protein] dehydratase FabZ (151 aa).

His-54 is a catalytic residue.

Belongs to the thioester dehydratase family. FabZ subfamily.

The protein resides in the cytoplasm. It carries out the reaction a (3R)-hydroxyacyl-[ACP] = a (2E)-enoyl-[ACP] + H2O. Functionally, involved in unsaturated fatty acids biosynthesis. Catalyzes the dehydration of short chain beta-hydroxyacyl-ACPs and long chain saturated and unsaturated beta-hydroxyacyl-ACPs. The polypeptide is 3-hydroxyacyl-[acyl-carrier-protein] dehydratase FabZ (Blochmanniella pennsylvanica (strain BPEN)).